Consider the following 42-residue polypeptide: uncharacterized protein (42 aa).

A helical membrane pass occupies residues 15 to 35 (INVCLSFFFLFYFIFVLFFAA).

Its subcellular location is the membrane. This is an uncharacterized protein from Dictyostelium discoideum (Social amoeba).